We begin with the raw amino-acid sequence, 312 residues long: Heterotepalin-4 (312 aa).

The signal sequence occupies residues 1–22 (MKSMLVVTISVWLILAPTSTWA). Intrachain disulfides connect C56/C280 and C107/C128. E197 is an active-site residue. A propeptide spanning residues 284–312 (YNQNAMFPQLIMSTYYNYMANLGDLFEEF) is cleaved from the precursor.

It carries out the reaction Endohydrolysis of the N-glycosidic bond at one specific adenosine on the 28S rRNA.. Its function is as follows. Inhibits protein synthesis in vitro. This chain is Heterotepalin-4, found in Phytolacca heterotepala (Mexican pokeweed).